We begin with the raw amino-acid sequence, 135 residues long: Small ribosomal subunit protein eS6 (135 aa).

The protein belongs to the eukaryotic ribosomal protein eS6 family.

In Methanospirillum hungatei JF-1 (strain ATCC 27890 / DSM 864 / NBRC 100397 / JF-1), this protein is Small ribosomal subunit protein eS6.